The sequence spans 201 residues: Ribonuclease HII (201 aa).

The region spanning 15 to 201 (QRVAGVDEVG…FRPVRRFLEA (187 aa)) is the RNase H type-2 domain. Positions 21, 22, and 113 each coordinate a divalent metal cation.

The protein belongs to the RNase HII family. Mn(2+) serves as cofactor. The cofactor is Mg(2+).

The protein resides in the cytoplasm. The catalysed reaction is Endonucleolytic cleavage to 5'-phosphomonoester.. Functionally, endonuclease that specifically degrades the RNA of RNA-DNA hybrids. The protein is Ribonuclease HII of Nitrosococcus oceani (strain ATCC 19707 / BCRC 17464 / JCM 30415 / NCIMB 11848 / C-107).